We begin with the raw amino-acid sequence, 304 residues long: Protein translocase subunit SecF (304 aa).

Helical transmembrane passes span 20 to 40 (AKLF…LIFT), 143 to 163 (AMMA…IRFE), 164 to 184 (LIFA…TLGF), 195 to 215 (TVVA…IVVF), 244 to 266 (LSRT…IFGG), and 276 to 298 (LVIG…VYLI).

It belongs to the SecD/SecF family. SecF subfamily. In terms of assembly, forms a complex with SecD. Part of the essential Sec protein translocation apparatus which comprises SecA, SecYEG and auxiliary proteins SecDF. Other proteins may also be involved.

Its subcellular location is the cell inner membrane. Its function is as follows. Part of the Sec protein translocase complex. Interacts with the SecYEG preprotein conducting channel. SecDF uses the proton motive force (PMF) to complete protein translocation after the ATP-dependent function of SecA. In Calditerrivibrio nitroreducens (strain DSM 19672 / NBRC 101217 / Yu37-1), this protein is Protein translocase subunit SecF.